The following is a 189-amino-acid chain: GTPase NRas (189 aa).

Residues 10-18 and 29-30 contribute to the GTP site; these read GAGGVGKSA and VD. The Effector region motif lies at 32–40; it reads YDPTIEDSY. Residue 57 to 61 coordinates GTP; the sequence is DTAGQ. S89 bears the Phosphoserine mark. 116 to 119 contacts GTP; the sequence is NKCD. The interval 166-185 is hypervariable region; sequence YRLKKLNSSDDGTQGCMGSP. Residue K170 forms a Glycyl lysine isopeptide (Lys-Gly) (interchain with G-Cter in ubiquitin) linkage. C181 carries S-palmitoyl cysteine lipidation. Residue C186 is the site of S-farnesyl cysteine attachment. The propeptide at 187-189 is removed in mature form; it reads VLM.

This sequence belongs to the small GTPase superfamily. Ras family. In terms of assembly, interacts (active GTP-bound form preferentially) with RGS14. Interacts (active GTP-bound form) with RASSF7. Interacts (active GTP-bound form) with both SHOC2 and PP1c (all isoforms) to form a tertiary complex; SHOC2 and PP1c preferably bind M-Ras/MRAS, but they also bind K-Ras/KRAS, N-Ras/NRAS and H-Ras/HRAS. Palmitoylated by the ZDHHC9-GOLGA7 complex. Depalmitoylated by ABHD17A, ABHD17B and ABHD17C. A continuous cycle of de- and re-palmitoylation regulates rapid exchange between plasma membrane and Golgi. Post-translationally, acetylation at Lys-104 prevents interaction with guanine nucleotide exchange factors (GEFs). In terms of processing, ubiquitinated by the BCR(LZTR1) E3 ubiquitin ligase complex at Lys-170 in a non-degradative manner, leading to inhibit Ras signaling by decreasing Ras association with membranes. Phosphorylation at Ser-89 enhances NRAS association with its downstream effectors.

The protein localises to the cell membrane. Its subcellular location is the golgi apparatus membrane. It catalyses the reaction GTP + H2O = GDP + phosphate + H(+). Its activity is regulated as follows. Alternates between an inactive form bound to GDP and an active form bound to GTP. Activated by a guanine nucleotide-exchange factor (GEF) and inactivated by a GTPase-activating protein (GAP). Its function is as follows. Ras proteins bind GDP/GTP and possess intrinsic GTPase activity. The sequence is that of GTPase NRas (Nras) from Mus musculus (Mouse).